Reading from the N-terminus, the 452-residue chain is Tol-Pal system protein TolB (452 aa).

The signal sequence occupies residues 1-31 (MCGVRRGMGVLLLFCAVALCAMPFVVRSVWG).

The protein belongs to the TolB family. The Tol-Pal system is composed of five core proteins: the inner membrane proteins TolA, TolQ and TolR, the periplasmic protein TolB and the outer membrane protein Pal. They form a network linking the inner and outer membranes and the peptidoglycan layer.

It is found in the periplasm. Functionally, part of the Tol-Pal system, which plays a role in outer membrane invagination during cell division and is important for maintaining outer membrane integrity. In Syntrophus aciditrophicus (strain SB), this protein is Tol-Pal system protein TolB.